We begin with the raw amino-acid sequence, 55 residues long: uncharacterized protein (55 aa).

This is an uncharacterized protein from Clostridium perfringens.